Reading from the N-terminus, the 292-residue chain is Protein/nucleic acid deglycase HchA (292 aa).

The span at 1–12 (MSQDVNELSKQP) shows a compositional bias: polar residues. A disordered region spans residues 1-23 (MSQDVNELSKQPTPDKAEDNAFF). The active-site Nucleophile is the Cys190.

This sequence belongs to the peptidase C56 family. HchA subfamily.

The protein localises to the cytoplasm. The catalysed reaction is N(omega)-(1-hydroxy-2-oxopropyl)-L-arginyl-[protein] + H2O = lactate + L-arginyl-[protein] + H(+). It carries out the reaction N(6)-(1-hydroxy-2-oxopropyl)-L-lysyl-[protein] + H2O = lactate + L-lysyl-[protein] + H(+). The enzyme catalyses S-(1-hydroxy-2-oxopropyl)-L-cysteinyl-[protein] + H2O = lactate + L-cysteinyl-[protein] + H(+). It catalyses the reaction N(omega)-(1-hydroxy-2-oxoethyl)-L-arginyl-[protein] + H2O = L-arginyl-[protein] + glycolate + H(+). The catalysed reaction is N(6)-(1-hydroxy-2-oxoethyl)-L-lysyl-[protein] + H2O = glycolate + L-lysyl-[protein] + H(+). It carries out the reaction S-(1-hydroxy-2-oxoethyl)-L-cysteinyl-[protein] + H2O = glycolate + L-cysteinyl-[protein] + H(+). The enzyme catalyses N(2)-(1-hydroxy-2-oxopropyl)-dGTP + H2O = lactate + dGTP + H(+). It catalyses the reaction N(2)-(1-hydroxy-2-oxopropyl)-GTP + H2O = lactate + GTP + H(+). The catalysed reaction is N(2)-(1-hydroxy-2-oxopropyl)-GDP + H2O = lactate + GDP + H(+). It carries out the reaction N(2)-(1-hydroxy-2-oxopropyl)-GMP + H2O = lactate + GMP + H(+). The enzyme catalyses N(2)-(1-hydroxy-2-oxoethyl)-dGTP + H2O = dGTP + glycolate + H(+). It catalyses the reaction N(2)-(1-hydroxy-2-oxoethyl)-GTP + H2O = glycolate + GTP + H(+). The catalysed reaction is N(2)-(1-hydroxy-2-oxoethyl)-GDP + H2O = glycolate + GDP + H(+). It carries out the reaction N(2)-(1-hydroxy-2-oxoethyl)-GMP + H2O = glycolate + GMP + H(+). The enzyme catalyses an N(2)-(1-hydroxy-2-oxopropyl)-guanosine in RNA + H2O = a guanosine in RNA + lactate + H(+). It catalyses the reaction an N(2)-(1-hydroxy-2-oxopropyl)-2'-deoxyguanosine in DNA + H2O = a 2'-deoxyguanosine in DNA + lactate + H(+). The catalysed reaction is an N(2)-(1-hydroxy-2-oxoethyl)-guanosine in RNA + H2O = a guanosine in RNA + glycolate + H(+). It carries out the reaction an N(2)-(1-hydroxy-2-oxoethyl)-2'-deoxyguanosine in DNA + H2O = a 2'-deoxyguanosine in DNA + glycolate + H(+). Functionally, protein and nucleotide deglycase that catalyzes the deglycation of the Maillard adducts formed between amino groups of proteins or nucleotides and reactive carbonyl groups of glyoxals. Thus, functions as a protein deglycase that repairs methylglyoxal- and glyoxal-glycated proteins, and releases repaired proteins and lactate or glycolate, respectively. Deglycates cysteine, arginine and lysine residues in proteins, and thus reactivates these proteins by reversing glycation by glyoxals. Acts on early glycation intermediates (hemithioacetals and aminocarbinols), preventing the formation of Schiff bases and advanced glycation endproducts (AGE). Also functions as a nucleotide deglycase able to repair glycated guanine in the free nucleotide pool (GTP, GDP, GMP, dGTP) and in DNA and RNA. Is thus involved in a major nucleotide repair system named guanine glycation repair (GG repair), dedicated to reversing methylglyoxal and glyoxal damage via nucleotide sanitization and direct nucleic acid repair. Plays an important role in protecting cells from carbonyl stress. The sequence is that of Protein/nucleic acid deglycase HchA from Staphylococcus aureus (strain MSSA476).